The following is a 95-amino-acid chain: Co-chaperonin GroES (95 aa).

The protein belongs to the GroES chaperonin family. Heptamer of 7 subunits arranged in a ring. Interacts with the chaperonin GroEL.

It localises to the cytoplasm. In terms of biological role, together with the chaperonin GroEL, plays an essential role in assisting protein folding. The GroEL-GroES system forms a nano-cage that allows encapsulation of the non-native substrate proteins and provides a physical environment optimized to promote and accelerate protein folding. GroES binds to the apical surface of the GroEL ring, thereby capping the opening of the GroEL channel. The chain is Co-chaperonin GroES from Francisella tularensis subsp. holarctica (strain FTNF002-00 / FTA).